Here is a 98-residue protein sequence, read N- to C-terminus: NADH-ubiquinone oxidoreductase chain 4L (98 aa).

A run of 3 helical transmembrane segments spans residues methionine 1 to methionine 21, alanine 29 to leucine 49, and methionine 59 to valine 79.

Belongs to the complex I subunit 4L family. As to quaternary structure, core subunit of respiratory chain NADH dehydrogenase (Complex I) which is composed of 45 different subunits.

The protein resides in the mitochondrion inner membrane. The enzyme catalyses a ubiquinone + NADH + 5 H(+)(in) = a ubiquinol + NAD(+) + 4 H(+)(out). In terms of biological role, core subunit of the mitochondrial membrane respiratory chain NADH dehydrogenase (Complex I) which catalyzes electron transfer from NADH through the respiratory chain, using ubiquinone as an electron acceptor. Part of the enzyme membrane arm which is embedded in the lipid bilayer and involved in proton translocation. This Hyperoodon ampullatus (Northern bottlenose whale) protein is NADH-ubiquinone oxidoreductase chain 4L (MT-ND4L).